The primary structure comprises 363 residues: tRNA N6-adenosine threonylcarbamoyltransferase (363 aa).

The Fe cation site is built by His-127 and His-131. Substrate contacts are provided by residues 150–154 (LISGG), Asp-183, Gly-196, and Asn-290. Asp-318 is a binding site for Fe cation.

It belongs to the KAE1 / TsaD family. Requires Fe(2+) as cofactor.

It localises to the cytoplasm. It catalyses the reaction L-threonylcarbamoyladenylate + adenosine(37) in tRNA = N(6)-L-threonylcarbamoyladenosine(37) in tRNA + AMP + H(+). In terms of biological role, required for the formation of a threonylcarbamoyl group on adenosine at position 37 (t(6)A37) in tRNAs that read codons beginning with adenine. Is involved in the transfer of the threonylcarbamoyl moiety of threonylcarbamoyl-AMP (TC-AMP) to the N6 group of A37, together with TsaE and TsaB. TsaD likely plays a direct catalytic role in this reaction. This is tRNA N6-adenosine threonylcarbamoyltransferase from Zymomonas mobilis subsp. mobilis (strain ATCC 31821 / ZM4 / CP4).